The primary structure comprises 118 residues: Large ribosomal subunit protein bL20 (118 aa).

Belongs to the bacterial ribosomal protein bL20 family.

Its function is as follows. Binds directly to 23S ribosomal RNA and is necessary for the in vitro assembly process of the 50S ribosomal subunit. It is not involved in the protein synthesizing functions of that subunit. The chain is Large ribosomal subunit protein bL20 from Ralstonia nicotianae (strain ATCC BAA-1114 / GMI1000) (Ralstonia solanacearum).